Here is a 201-residue protein sequence, read N- to C-terminus: Probable molybdenum cofactor guanylyltransferase (201 aa).

Residues 16–18 (LAG), Lys28, Asp75, and Asp107 contribute to the GTP site. Residue Asp107 participates in Mg(2+) binding.

The protein belongs to the MobA family. It depends on Mg(2+) as a cofactor.

It localises to the cytoplasm. The catalysed reaction is Mo-molybdopterin + GTP + H(+) = Mo-molybdopterin guanine dinucleotide + diphosphate. Its function is as follows. Transfers a GMP moiety from GTP to Mo-molybdopterin (Mo-MPT) cofactor (Moco or molybdenum cofactor) to form Mo-molybdopterin guanine dinucleotide (Mo-MGD) cofactor. The sequence is that of Probable molybdenum cofactor guanylyltransferase from Mycobacterium ulcerans (strain Agy99).